The chain runs to 185 residues: Threonylcarbamoyl-AMP synthase (185 aa).

The YrdC-like domain occupies 4–185 (SFRAQCAARV…LVTGQVIRPA (182 aa)).

It belongs to the SUA5 family. TsaC subfamily.

The protein localises to the cytoplasm. The enzyme catalyses L-threonine + hydrogencarbonate + ATP = L-threonylcarbamoyladenylate + diphosphate + H2O. Required for the formation of a threonylcarbamoyl group on adenosine at position 37 (t(6)A37) in tRNAs that read codons beginning with adenine. Catalyzes the conversion of L-threonine, HCO(3)(-)/CO(2) and ATP to give threonylcarbamoyl-AMP (TC-AMP) as the acyladenylate intermediate, with the release of diphosphate. In Pseudomonas aeruginosa (strain UCBPP-PA14), this protein is Threonylcarbamoyl-AMP synthase.